Reading from the N-terminus, the 686-residue chain is DNA ligase 1 (686 aa).

NAD(+) contacts are provided by residues 35–39 (DFEYD), 84–85 (SL), and E119. K121 serves as the catalytic N6-AMP-lysine intermediate. Positions 142, 177, 293, and 317 each coordinate NAD(+). Residues C411, C414, C429, and C434 each coordinate Zn(2+). Residues 602 to 686 (RVGEQLAGLT…LAEKGAPPLP (85 aa)) form the BRCT domain.

This sequence belongs to the NAD-dependent DNA ligase family. LigA subfamily. The cofactor is Mg(2+). It depends on Mn(2+) as a cofactor.

The enzyme catalyses NAD(+) + (deoxyribonucleotide)n-3'-hydroxyl + 5'-phospho-(deoxyribonucleotide)m = (deoxyribonucleotide)n+m + AMP + beta-nicotinamide D-nucleotide.. Functionally, DNA ligase that catalyzes the formation of phosphodiester linkages between 5'-phosphoryl and 3'-hydroxyl groups in double-stranded DNA using NAD as a coenzyme and as the energy source for the reaction. It is essential for DNA replication and repair of damaged DNA. This chain is DNA ligase 1, found in Deinococcus deserti (strain DSM 17065 / CIP 109153 / LMG 22923 / VCD115).